We begin with the raw amino-acid sequence, 78 residues long: Large ribosomal subunit protein bL28 (78 aa).

Residues 1–22 are disordered; that stretch reads MSRVCQVTGKRPMSGNNRSHAM.

It belongs to the bacterial ribosomal protein bL28 family.

In Yersinia pseudotuberculosis serotype O:1b (strain IP 31758), this protein is Large ribosomal subunit protein bL28.